The chain runs to 217 residues: Urease accessory protein UreF (217 aa).

It belongs to the UreF family. In terms of assembly, ureD, UreF and UreG form a complex that acts as a GTP-hydrolysis-dependent molecular chaperone, activating the urease apoprotein by helping to assemble the nickel containing metallocenter of UreC. The UreE protein probably delivers the nickel.

It localises to the cytoplasm. Functionally, required for maturation of urease via the functional incorporation of the urease nickel metallocenter. The protein is Urease accessory protein UreF of Ruegeria pomeroyi (strain ATCC 700808 / DSM 15171 / DSS-3) (Silicibacter pomeroyi).